The primary structure comprises 464 residues: L-cysteine:1D-myo-inositol 2-amino-2-deoxy-alpha-D-glucopyranoside ligase (464 aa).

Cysteine 67 is a binding site for Zn(2+). L-cysteinyl-5'-AMP is bound by residues 67 to 70, threonine 82, and 105 to 107; these read CGIT and NVT. The short motif at 69-79 is the 'HIGH' region element; it reads ITPYDATHLGH. The short motif at 207 to 212 is the 'ERGGDP' region element; sequence ERGGDP. L-cysteinyl-5'-AMP is bound at residue tryptophan 247. Residue cysteine 251 coordinates Zn(2+). 269-271 contacts L-cysteinyl-5'-AMP; that stretch reads GTD. Zn(2+) is bound at residue histidine 276. Valine 303 contacts L-cysteinyl-5'-AMP. The short motif at 309–313 is the 'KMSKS' region element; that stretch reads KMSKS. A disordered region spans residues 410 to 435; sequence AGGSAGAGPDPTHQGGPVRGSGGDVP.

It belongs to the class-I aminoacyl-tRNA synthetase family. MshC subfamily. As to quaternary structure, monomer. Zn(2+) is required as a cofactor.

The enzyme catalyses 1D-myo-inositol 2-amino-2-deoxy-alpha-D-glucopyranoside + L-cysteine + ATP = 1D-myo-inositol 2-(L-cysteinylamino)-2-deoxy-alpha-D-glucopyranoside + AMP + diphosphate + H(+). Catalyzes the ATP-dependent condensation of GlcN-Ins and L-cysteine to form L-Cys-GlcN-Ins. This Frankia casuarinae (strain DSM 45818 / CECT 9043 / HFP020203 / CcI3) protein is L-cysteine:1D-myo-inositol 2-amino-2-deoxy-alpha-D-glucopyranoside ligase.